We begin with the raw amino-acid sequence, 219 residues long: Thiopurine S-methyltransferase (219 aa).

S-adenosyl-L-methionine contacts are provided by Trp-10, Leu-45, Glu-66, and Arg-123.

This sequence belongs to the class I-like SAM-binding methyltransferase superfamily. TPMT family.

It is found in the cytoplasm. The enzyme catalyses S-adenosyl-L-methionine + a thiopurine = S-adenosyl-L-homocysteine + a thiopurine S-methylether.. The protein is Thiopurine S-methyltransferase of Bordetella pertussis (strain Tohama I / ATCC BAA-589 / NCTC 13251).